Here is a 106-residue protein sequence, read N- to C-terminus: Integration host factor subunit beta (106 aa).

The disordered stretch occupies residues Pro57–Ala106. The segment covering Thr82 to Leu95 has biased composition (basic and acidic residues).

It belongs to the bacterial histone-like protein family. As to quaternary structure, heterodimer of an alpha and a beta chain.

Its function is as follows. This protein is one of the two subunits of integration host factor, a specific DNA-binding protein that functions in genetic recombination as well as in transcriptional and translational control. This is Integration host factor subunit beta from Afipia carboxidovorans (strain ATCC 49405 / DSM 1227 / KCTC 32145 / OM5) (Oligotropha carboxidovorans).